The primary structure comprises 237 residues: MAPRWKWKGAEAKALAEPVSKTVSELRSSLTQTEALGFLSSCNVLLSVESEEAELLDRCCFGRLVVGAEKDKRWIQLSFEEAFFLFYKLKCIKICLHGRSLENEVDLWRSMSSFKQDFAILYKAYSHLRSKNWIVRSGLQYGVDFVVYRHHPSLVHSEYAVLVQSIGGNDRLKVWSDIHCSVRLTGSVAKSLLVLYVNRKVNTEKMNLPLCLEDYTVEEQTIRRWSPELSREDETRT.

Active-site residues include tyrosine 148, histidine 156, and lysine 190.

The protein belongs to the tRNA-intron endonuclease family. As to quaternary structure, tRNA splicing endonuclease is a heterotetramer composed of SEN2, SEN15, SEN34/LENG5 and SEN54.

The protein resides in the nucleus. It carries out the reaction pretRNA = a 3'-half-tRNA molecule with a 5'-OH end + a 5'-half-tRNA molecule with a 2',3'-cyclic phosphate end + an intron with a 2',3'-cyclic phosphate and a 5'-hydroxyl terminus.. In terms of biological role, constitutes one of the two catalytic subunit of the tRNA-splicing endonuclease complex, a complex responsible for identification and cleavage of the splice sites in pre-tRNA. It cleaves pre-tRNA at the 5'- and 3'-splice sites to release the intron. The products are an intron and two tRNA half-molecules bearing 2',3'-cyclic phosphate and 5'-OH termini. There are no conserved sequences at the splice sites, but the intron is invariably located at the same site in the gene, placing the splice sites an invariant distance from the constant structural features of the tRNA body. Probably carries the active site for 5'-splice site cleavage. In Arabidopsis thaliana (Mouse-ear cress), this protein is tRNA-splicing endonuclease subunit Sen2-1 (SEN1).